The chain runs to 265 residues: Synaptoporin (265 aa).

Residues 1 to 4 (MCMV) lie on the Cytoplasmic side of the membrane. The MARVEL domain occupies 1–202 (MCMVIFAPLF…NIWFVFKETG (202 aa)). The helical transmembrane segment at 5–25 (IFAPLFAIFAFATCGGYSGGL) threads the bilayer. The Vesicular segment spans residues 26 to 81 (RLSVDCVNKTESNLSIDIAFAYPFRLHQVTFEVPTCEGKERQKLALIGDSSSSAEF). N-linked (GlcNAc...) asparagine glycosylation is found at N33 and N38. Residues 82 to 102 (FVTVAVFAFLYSLAATVVYIF) form a helical membrane-spanning segment. The Cytoplasmic segment spans residues 103-114 (FQNKYRENNRGP). The helical transmembrane segment at 115–135 (LIDFIVTVVFSFLWLVGSSAW) threads the bilayer. At 136–177 (AKGLSDVKVATDPKEVLLLMSACKQPSNKCMAIHSPVMSSLN) the chain is on the vesicular side. The chain crosses the membrane as a helical span at residues 178–198 (TSVVFGFLNFILWAGNIWFVF). Over 199 to 265 (KETGWHSSGQ…TGPTSFTNQI (67 aa)) the chain is Cytoplasmic. 5 tandem repeats follow at residues 210–214 (YLSDP), 222–226 (YNQGG), 227–231 (YNQDS), 232–236 (YGSSS), and 238–242 (YSQQA). Residues 210–242 (YLSDPMEKHSSSYNQGGYNQDSYGSSSGYSQQA) are 5 X approximate repeats. S212 carries the phosphoserine modification. Residues 221 to 265 (SYNQGGYNQDSYGSSSGYSQQASLGPTSDEFGQQPTGPTSFTNQI) form a disordered region. The span at 224-243 (QGGYNQDSYGSSSGYSQQAS) shows a compositional bias: low complexity. Residues 244-265 (LGPTSDEFGQQPTGPTSFTNQI) show a composition bias toward polar residues.

Belongs to the synaptophysin/synaptobrevin family.

It localises to the cytoplasmic vesicle. Its subcellular location is the secretory vesicle. It is found in the synaptic vesicle membrane. The protein localises to the synapse. The protein resides in the synaptosome. In terms of biological role, intrinsic membrane protein of small synaptic vesicles. Probable vesicular channel protein. The protein is Synaptoporin (SYNPR) of Homo sapiens (Human).